The following is a 200-amino-acid chain: FMN-dependent NADH:quinone oxidoreductase 2 (200 aa).

Residue 135 to 138 (SRGG) participates in FMN binding.

It belongs to the azoreductase type 1 family. Homodimer. FMN is required as a cofactor.

The catalysed reaction is 2 a quinone + NADH + H(+) = 2 a 1,4-benzosemiquinone + NAD(+). It carries out the reaction N,N-dimethyl-1,4-phenylenediamine + anthranilate + 2 NAD(+) = 2-(4-dimethylaminophenyl)diazenylbenzoate + 2 NADH + 2 H(+). Its function is as follows. Quinone reductase that provides resistance to thiol-specific stress caused by electrophilic quinones. In terms of biological role, also exhibits azoreductase activity. Catalyzes the reductive cleavage of the azo bond in aromatic azo compounds to the corresponding amines. The polypeptide is FMN-dependent NADH:quinone oxidoreductase 2 (Clostridium acetobutylicum (strain ATCC 824 / DSM 792 / JCM 1419 / IAM 19013 / LMG 5710 / NBRC 13948 / NRRL B-527 / VKM B-1787 / 2291 / W)).